A 182-amino-acid chain; its full sequence is Prorelaxin (182 aa).

The first 24 residues, 1 to 24 (MPRLFSYLLGVWLLLSQLPREIPG), serve as a signal peptide directing secretion. Gln-25 carries the pyrrolidone carboxylic acid modification. 3 disulfide bridges follow: Cys-34-Cys-169, Cys-46-Cys-182, and Cys-168-Cys-173. Positions 57 to 154 (SLEEPQLETG…LKNLGLDKHS (98 aa)) are cleaved as a propeptide — connecting peptide. Positions 159–160 (LF) are excised as a propeptide.

This sequence belongs to the insulin family. Heterodimer of a B chain and an A chain linked by two disulfide bonds.

The protein resides in the secreted. Its function is as follows. Relaxin is an ovarian hormone that acts with estrogen to produce dilatation of the birth canal in many mammals. This Sus scrofa (Pig) protein is Prorelaxin (RLN).